The sequence spans 159 residues: uncharacterized protein (159 aa).

Transmembrane regions (helical) follow at residues 16–36, 84–104, and 112–132; these read IVLPLVQIIHVSGHSFMAFIF, VYAGGCLFNLITIFAINLLII, and VFFYQFVYFSTYYVFFALLPV.

Its subcellular location is the cell membrane. This is an uncharacterized protein from Bacillus subtilis (strain 168).